Reading from the N-terminus, the 204-residue chain is Large ribosomal subunit protein uL4 (204 aa).

The segment at 53–73 (AFVSGGGKKPWRQKGRGGARA) is disordered.

The protein belongs to the universal ribosomal protein uL4 family. As to quaternary structure, part of the 50S ribosomal subunit.

One of the primary rRNA binding proteins, this protein initially binds near the 5'-end of the 23S rRNA. It is important during the early stages of 50S assembly. It makes multiple contacts with different domains of the 23S rRNA in the assembled 50S subunit and ribosome. Functionally, forms part of the polypeptide exit tunnel. The chain is Large ribosomal subunit protein uL4 from Campylobacter concisus (strain 13826).